Here is a 907-residue protein sequence, read N- to C-terminus: Protein translocase subunit SecA (907 aa).

ATP is bound by residues glutamine 87, 105–109, and aspartate 510; that span reads GEGKT. 4 residues coordinate Zn(2+): cysteine 892, cysteine 894, cysteine 903, and histidine 904.

The protein belongs to the SecA family. In terms of assembly, monomer and homodimer. Part of the essential Sec protein translocation apparatus which comprises SecA, SecYEG and auxiliary proteins SecDF-YajC and YidC. It depends on Zn(2+) as a cofactor.

The protein resides in the cell inner membrane. It is found in the cytoplasm. It carries out the reaction ATP + H2O + cellular proteinSide 1 = ADP + phosphate + cellular proteinSide 2.. Part of the Sec protein translocase complex. Interacts with the SecYEG preprotein conducting channel. Has a central role in coupling the hydrolysis of ATP to the transfer of proteins into and across the cell membrane, serving both as a receptor for the preprotein-SecB complex and as an ATP-driven molecular motor driving the stepwise translocation of polypeptide chains across the membrane. The chain is Protein translocase subunit SecA from Acinetobacter baumannii (strain AB0057).